Here is a 220-residue protein sequence, read N- to C-terminus: Peptide methionine sulfoxide reductase MsrA (220 aa).

Residue cysteine 52 is part of the active site.

The protein belongs to the MsrA Met sulfoxide reductase family.

It catalyses the reaction L-methionyl-[protein] + [thioredoxin]-disulfide + H2O = L-methionyl-(S)-S-oxide-[protein] + [thioredoxin]-dithiol. It carries out the reaction [thioredoxin]-disulfide + L-methionine + H2O = L-methionine (S)-S-oxide + [thioredoxin]-dithiol. Its function is as follows. Has an important function as a repair enzyme for proteins that have been inactivated by oxidation. Catalyzes the reversible oxidation-reduction of methionine sulfoxide in proteins to methionine. The chain is Peptide methionine sulfoxide reductase MsrA from Corynebacterium diphtheriae (strain ATCC 700971 / NCTC 13129 / Biotype gravis).